Here is a 425-residue protein sequence, read N- to C-terminus: Peroxisomal membrane protein PEX14 (425 aa).

Disordered stretches follow at residues 49 to 89 (RSQG…YRNA) and 247 to 425 (DEPI…AAQS). Positions 56-76 (SSSVASQVSSYSPSASQSSVA) are enriched in low complexity. Residues 89 to 97 (APPLPERDW) carry the SH3-binding motif. Polar residues predominate over residues 256–297 (PSLTTGANSLTSESSGRSSIPHSQSVPIRTQLTTPPSDSDTS). Composition is skewed to basic and acidic residues over residues 315-324 (DILRKEKNRT) and 333-366 (LGKD…PEED).

It belongs to the peroxin-14 family. As to quaternary structure, interacts with PEX13 (via SH3 domain); forming the PEX13-PEX14 docking complex. Interacts with PEX5 (via WxxxF/Y motifs). Interacts with PEX20 (via WxxxF/Y motifs). Interacts with PEX3, PEX7, PEX8 and PEX17. Phosphorylated on serine or threonine residues.

Its subcellular location is the peroxisome membrane. Functionally, component of the PEX13-PEX14 docking complex, a translocon channel that specifically mediates the import of peroxisomal cargo proteins bound to PEX5 or PEX20 receptors. The PEX13-PEX14 docking complex forms a large import pore which can be opened to a diameter of about 9 nm. Mechanistically, PEX5 (or PEX20) receptor along with cargo proteins associates with the PEX14 subunit of the PEX13-PEX14 docking complex in the cytosol, leading to the insertion of the receptor into the organelle membrane with the concomitant translocation of the cargo into the peroxisome matrix. In Komagataella pastoris (Yeast), this protein is Peroxisomal membrane protein PEX14.